Consider the following 122-residue polypeptide: Large ribosomal subunit protein uL14 (122 aa).

Belongs to the universal ribosomal protein uL14 family. In terms of assembly, part of the 50S ribosomal subunit. Forms a cluster with proteins L3 and L19. In the 70S ribosome, L14 and L19 interact and together make contacts with the 16S rRNA in bridges B5 and B8.

Its function is as follows. Binds to 23S rRNA. Forms part of two intersubunit bridges in the 70S ribosome. This is Large ribosomal subunit protein uL14 from Bifidobacterium adolescentis (strain ATCC 15703 / DSM 20083 / NCTC 11814 / E194a).